Consider the following 264-residue polypeptide: Tryptophan synthase alpha chain (264 aa).

Active-site proton acceptor residues include Glu49 and Asp60.

It belongs to the TrpA family. As to quaternary structure, tetramer of two alpha and two beta chains.

The enzyme catalyses (1S,2R)-1-C-(indol-3-yl)glycerol 3-phosphate + L-serine = D-glyceraldehyde 3-phosphate + L-tryptophan + H2O. It functions in the pathway amino-acid biosynthesis; L-tryptophan biosynthesis; L-tryptophan from chorismate: step 5/5. The alpha subunit is responsible for the aldol cleavage of indoleglycerol phosphate to indole and glyceraldehyde 3-phosphate. This is Tryptophan synthase alpha chain from Microcystis aeruginosa (strain NIES-843 / IAM M-2473).